The sequence spans 391 residues: Serpin-ZX (391 aa).

The RCL stretch occupies residues 337-361 (GTEAAAASAGVIKLRGLLMEEDEID). Residue asparagine 375 is glycosylated (N-linked (GlcNAc...) asparagine).

It belongs to the serpin family. Interacts with RD21A. In terms of tissue distribution, expressed in root tips. Expressed in siliques (at protein level).

The protein resides in the secreted. It is found in the extracellular space. Its subcellular location is the apoplast. It localises to the cytoplasm. In terms of biological role, inhibits metacaspase-9 (MC9) cysteine protease. Functions through cleavage of its reactive center loop and covalent binding to MC9. Involved in the control of elicitor-stimulated programmed cell death (PCD). During infection by the necrotrophic fungal pathogen Botrytis cinerea, functions to protect cells by limiting the PCD-promoting protease RD21A activity that is released from the ER body or vacuole to the cytoplasm. Involved in the control of water stress-induced cell death by limiting the pro-death protease RD21A activity that is released from the vacuole to the cytoplasm. The protein is Serpin-ZX of Arabidopsis thaliana (Mouse-ear cress).